A 935-amino-acid polypeptide reads, in one-letter code: Pre-mRNA-splicing factor CWC22 homolog (935 aa).

The segment at 1-179 (MSRSPSPDSP…PKDLLRTRTG (179 aa)) is disordered. Basic and acidic residues-rich tracts occupy residues 13–25 (VRDDEEKDAREQS) and 49–70 (ESSRKDSRESGKRRDSHEDEKM). Residues 84–148 (QHRRHRESRS…RSPARRRSPV (65 aa)) are compositionally biased toward basic residues. Basic and acidic residues predominate over residues 159 to 175 (PTEEPEKKKNDPKDLLR). The 189-residue stretch at 212–400 (KKKIHGLVNR…ETAMQIRKDK (189 aa)) folds into the MIF4G domain. The interval 463-489 (ADISSDEEEEVEDDDEESEAEEAPRKT) is disordered. Over residues 465 to 483 (ISSDEEEEVEDDDEESEAE) the composition is skewed to acidic residues. The MI domain occupies 502–633 (AFRREVYLTL…EWKILADVKM (132 aa)). Residues 725–935 (KAAQSSSDSS…VGSDDRRRRH (211 aa)) form a disordered region. Residues 729 to 763 (SSSDSSSDSSDSSDSSDSSGSSDSSDDSSSSSSSD) are compositionally biased toward low complexity. Composition is skewed to basic and acidic residues over residues 780-891 (KKKE…DRKE) and 897-935 (DRRDHRDRSRSRERNEKRRHDDDRRREEKVGSDDRRRRH).

This sequence belongs to the CWC22 family.

The protein localises to the nucleus. The protein resides in the nucleus speckle. Functionally, required for early embryogenesis and tissue differentiation. Required for pre-mRNA splicing and for exon-junction complex (EJC) assembly. Hinders EIF4A3 from non-specifically binding RNA and escorts it to the splicing machinery to promote EJC assembly on mature mRNAs. Through its role in EJC assembly, required for nonsense-mediated mRNA decay. The protein is Pre-mRNA-splicing factor CWC22 homolog of Caenorhabditis briggsae.